We begin with the raw amino-acid sequence, 180 residues long: Der GTPase-activating protein YihI (180 aa).

Positions 1-10 are enriched in polar residues; sequence MKQPARTSQV. Disordered stretches follow at residues 1–102 and 158–180; these read MKQP…PRLT and DAED…RTPE. Positions 21-32 are enriched in basic and acidic residues; it reads TREEINQEARDR. The span at 45-54 shows a compositional bias: polar residues; that stretch reads SRANPATVSQ. Over residues 55 to 67 the composition is skewed to basic and acidic residues; that stretch reads KGDKSQSVKDPRI. A compositionally biased stretch (low complexity) spans 84 to 93; sequence PANPVKAAKP.

This sequence belongs to the YihI family. As to quaternary structure, interacts with Der.

Its function is as follows. A GTPase-activating protein (GAP) that modifies Der/EngA GTPase function. May play a role in ribosome biogenesis. The polypeptide is Der GTPase-activating protein YihI (Erwinia tasmaniensis (strain DSM 17950 / CFBP 7177 / CIP 109463 / NCPPB 4357 / Et1/99)).